Reading from the N-terminus, the 157-residue chain is MKEIVLAGGCFWGVEEYMSRIEGIVETKVGYANGIKENPSYEEVCSGVTGHAEACYIKYDESIISLEELLNKFWSIIDPTVLNKQGNDRGTQYRTGIFYLDEKDLNVIIKSKYQEQKNYRKPIVTEVEPLKCFYEAEEYHQKYLKKNPGGYCHIHLD.

Residue C10 is part of the active site.

The protein belongs to the MsrA Met sulfoxide reductase family.

It catalyses the reaction L-methionyl-[protein] + [thioredoxin]-disulfide + H2O = L-methionyl-(S)-S-oxide-[protein] + [thioredoxin]-dithiol. It carries out the reaction [thioredoxin]-disulfide + L-methionine + H2O = L-methionine (S)-S-oxide + [thioredoxin]-dithiol. In terms of biological role, has an important function as a repair enzyme for proteins that have been inactivated by oxidation. Catalyzes the reversible oxidation-reduction of methionine sulfoxide in proteins to methionine. The polypeptide is Peptide methionine sulfoxide reductase MsrA (Clostridium botulinum (strain Hall / ATCC 3502 / NCTC 13319 / Type A)).